The following is a 102-amino-acid chain: Putative pterin-4-alpha-carbinolamine dehydratase (102 aa).

The protein belongs to the pterin-4-alpha-carbinolamine dehydratase family.

It catalyses the reaction (4aS,6R)-4a-hydroxy-L-erythro-5,6,7,8-tetrahydrobiopterin = (6R)-L-erythro-6,7-dihydrobiopterin + H2O. This Burkholderia multivorans (strain ATCC 17616 / 249) protein is Putative pterin-4-alpha-carbinolamine dehydratase.